A 134-amino-acid chain; its full sequence is Protein Turandot E (134 aa).

The N-terminal stretch at 1–38 (MSYNRTLHSTTSILKMNSALQISCLLLVLGCLLGSGHG) is a signal peptide.

It belongs to the Turandot family.

It is found in the secreted. A humoral factor that may play a role in stress tolerance. The polypeptide is Protein Turandot E (Drosophila yakuba (Fruit fly)).